A 263-amino-acid chain; its full sequence is Probable methylthioribulose-1-phosphate dehydratase (263 aa).

Cysteine 102 contributes to the substrate binding site. Residues histidine 120 and histidine 122 each contribute to the Zn(2+) site. Catalysis depends on glutamate 144, which acts as the Proton donor/acceptor. Histidine 200 contributes to the Zn(2+) binding site.

The protein belongs to the aldolase class II family. MtnB subfamily. Zn(2+) serves as cofactor.

It is found in the cytoplasm. The enzyme catalyses 5-(methylsulfanyl)-D-ribulose 1-phosphate = 5-methylsulfanyl-2,3-dioxopentyl phosphate + H2O. Its pathway is amino-acid biosynthesis; L-methionine biosynthesis via salvage pathway; L-methionine from S-methyl-5-thio-alpha-D-ribose 1-phosphate: step 2/6. Its function is as follows. Catalyzes the dehydration of methylthioribulose-1-phosphate (MTRu-1-P) into 2,3-diketo-5-methylthiopentyl-1-phosphate (DK-MTP-1-P). The protein is Probable methylthioribulose-1-phosphate dehydratase of Caenorhabditis elegans.